We begin with the raw amino-acid sequence, 1314 residues long: MASKGTGMSFSRKSYRLTSDAEKSRVTGIVQEKLLSDYLYRIFSPPDRGPAAATSRKPLNFHNLPEHVDQLLQVDSEDNESQGQVEGRLGPSTVVLDHTGGFEGLLLVDDDLLGVIGHSNFGTIRSTTCVYKGKWVYEVLISSQGLMQIGWCTINCRFNQEEGVGDTHNSYAYDGNRVRKWNVTTTNYGKAWAAGDIVSCLIDLDDGTLSFCLNGVSLGTAFENLSRGLGMAYFPAISLSFKESVAFNFGSRPLRYPVAGFRPLQDPPFADLVRAQRLLGCFQAVLSVELDPVEGRLVETESSEWQLQGQPTVLLTLAHIFHHFAPLLRKVYLVEAVLMSFLLGVVEKGTPEQAQSVVHQILDLLWLFMEDYEVQDCLKQLMMSLLRLYRFSPIVPDLGLQIHYLRLTMSILRHEKSRKFLLSNVLFDMLRSVVFFYIKSPLRVEEAGLKELIPTTWWPHRSSRESRDGKEAREETTEERQRRRAYERGCQRLKKRIEVVEELQVQILKLLLDNKDDNGGEASRYIFLTKFRKFLQENASGRGNTPVLCPPEYMVCFLHRLVSALRFYWDEYKASNPRASFSEEAYIPPQIFYNGKVDYFDLQRLGGLLSHLRKTLKDDLASKANIVIDPLELQAATMDDLDEDEEPAPSAAQRPMQALAIGGALPLPRPGWLSSPTLGRANRFLSTAAVSLMTPRRLLSTMEKVKVRSLNVEQRTREDIEGSHWNEGLLLGRPPEEPEQPLTENSLLEVLDGTVMMYNLSVHQQLGKMVGVSDDVNEYAMALRDTEDKLRRCPKRRKDILAELTKSQKVFSEKLDHLSRRLAWVHATVYSQEKMLDIYWLLRVCLRTIEHGDRTGSLFAFMPEFYLSVAINSYSALKNYFGPVHSMEELPGYEETLTRLAAILAKHFADPRIVGTDIRDSLMQALASYVCYPHSLRAVERIPEEQRIAMVRNLLAPYEQRPWAQTNWILVRLWRGCGFGYRYTRLPHLLKTKPEDANLPSLQKPCPSTLLQQHMADLLRQGSDVAPSFLNSVLNQLNWAFSEFIGMIQEIQQAAERLERNFVDSRQLKVCATCFDLSVSLLRVLEMTITLVPEIFLDWSRPTSEMLLRRLAQLLNQVLNRVTAERNLFDRVVTLRLPGLESVDHYPILVAVTGILVRLLVHGPTSETEQATSVLLADPCFQLRSICYLLGQPEPLAPGTTLPAPDRKRFSLQSYTDYISAEELAQVEQMLAHLTAASAQAAAASLPTNEEDLCPICYAHPISAVFQPCGHKSCKACINQHLMNNKDCFFCKATIVSVEDWDKAANTSAMSSAA.

Ala2 is modified (N-acetylalanine). Positions 74-254 constitute a B30.2/SPRY domain; sequence VDSEDNESQG…VAFNFGSRPL (181 aa). Residues 460–483 are disordered; that stretch reads HRSSRESRDGKEAREETTEERQRR. The segment covering 462-483 has biased composition (basic and acidic residues); it reads SSRESRDGKEAREETTEERQRR. Ser675 carries the phosphoserine modification. Position 683 is an asymmetric dimethylarginine (Arg683). The interaction with NFKB1 stretch occupies residues 968–974; the sequence is WILVRLW. Zn(2+) contacts are provided by Cys1254, Cys1257, Cys1269, His1271, Cys1274, Cys1277, Cys1288, and Cys1291. The RING-type zinc finger occupies 1254-1292; it reads CPICYAHPISAVFQPCGHKSCKACINQHLMNNKDCFFCK.

In terms of assembly, component of the KPC complex composed of RNF123/KPC1 and UBAC1/KPC2. Interacts with UBAC1 and CDKN1B via its N-terminal domain. Interacts with RIGI (via N-terminus) and IFIH1 (via N-terminus). Post-translationally, ubiquitinated, leading to its degradation. Deubiquitinated by USP19, thereby stimulating CDKN1B ubiquitin-dependent degradation.

Its subcellular location is the cytoplasm. The catalysed reaction is S-ubiquitinyl-[E2 ubiquitin-conjugating enzyme]-L-cysteine + [acceptor protein]-L-lysine = [E2 ubiquitin-conjugating enzyme]-L-cysteine + N(6)-ubiquitinyl-[acceptor protein]-L-lysine.. The protein operates within protein modification; protein ubiquitination. Functionally, catalytic subunit of the KPC complex that acts as E3 ubiquitin-protein ligase. Promotes the ubiquitination and proteasome-mediated degradation of CDKN1B which is the cyclin-dependent kinase inhibitor at the G0-G1 transition of the cell cycle. Also acts as a key regulator of the NF-kappa-B signaling by promoting maturation of the NFKB1 component of NF-kappa-B: acts by catalyzing ubiquitination of the NFKB1 p105 precursor, leading to limited proteasomal degradation of NFKB1 p105 and generation of the active NFKB1 p50 subunit. Functions also as an inhibitor of innate antiviral signaling mediated by RIGI and IFIH1 independently of its E3 ligase activity. Interacts with the N-terminal CARD domains of RIGI and IFIH1 and competes with the downstream adapter MAVS. The protein is E3 ubiquitin-protein ligase RNF123 (Rnf123) of Mus musculus (Mouse).